The following is a 225-amino-acid chain: 2-C-methyl-D-erythritol 4-phosphate cytidylyltransferase (225 aa).

The protein belongs to the IspD/TarI cytidylyltransferase family. IspD subfamily.

The enzyme catalyses 2-C-methyl-D-erythritol 4-phosphate + CTP + H(+) = 4-CDP-2-C-methyl-D-erythritol + diphosphate. The protein operates within isoprenoid biosynthesis; isopentenyl diphosphate biosynthesis via DXP pathway; isopentenyl diphosphate from 1-deoxy-D-xylulose 5-phosphate: step 2/6. In terms of biological role, catalyzes the formation of 4-diphosphocytidyl-2-C-methyl-D-erythritol from CTP and 2-C-methyl-D-erythritol 4-phosphate (MEP). In Chromobacterium violaceum (strain ATCC 12472 / DSM 30191 / JCM 1249 / CCUG 213 / NBRC 12614 / NCIMB 9131 / NCTC 9757 / MK), this protein is 2-C-methyl-D-erythritol 4-phosphate cytidylyltransferase.